Reading from the N-terminus, the 368-residue chain is Meiotic driver wtf23 (368 aa).

The disordered stretch occupies residues 1 to 98; that stretch reads MKNKYYPLRS…SSGTADNSST (98 aa). Over residues 11 to 29 the composition is skewed to basic and acidic residues; the sequence is SMDELSAKNDNEIDLEKGP. Polar residues-rich tracts occupy residues 57-72 and 89-98; these read GANN…STTP and SSGTADNSST. The next 7 membrane-spanning stretches (helical) occupy residues 105-124, 139-158, 170-192, 202-221, 234-256, 266-283, and 328-350; these read FLSF…YLTY, YFGV…WYFY, IFLA…VISI, MIII…GCVK, STCT…FWTF, VFLL…TMFL, and GIAF…FRGG.

It belongs to the WTF family. In terms of assembly, homomer. Forms protein aggregates. The two isoforms can interact with each other and with themselves. High sequence similarity is required for their interaction.

Its subcellular location is the spore membrane. The protein resides in the vacuole membrane. It localises to the ascus epiplasm. It is found in the cytoplasm. The protein localises to the endoplasmic reticulum membrane. Functionally, promotes unequal transmission of alleles from the parental zygote to progeny spores by acting as poison/antidote system where the poison and antidote proteins are produced from the same locus; the poison component is trans-acting and targets all spores within an ascus whereas the antidote component is spore-specific, leading to poisoning of all progeny that do not inherit the allele. Its function is as follows. Localizes isoform 2 to the vacuole thereby facilitating its degradation. In terms of biological role, forms toxic aggregates that disrupt spore maturation. The chain is Meiotic driver wtf23 from Schizosaccharomyces pombe (strain 972 / ATCC 24843) (Fission yeast).